The primary structure comprises 317 residues: Electron transfer flavoprotein subunit alpha (317 aa).

The protein belongs to the ETF alpha-subunit/FixB family. Heterodimer of an alpha and a beta subunit. FAD is required as a cofactor.

Its subcellular location is the cytoplasm. The protein operates within lipid metabolism; butanoate metabolism. Its function is as follows. Part of an electron transfer flavoprotein involved in syntrophic growth of S.wolfei with butyrate. Probably receives electrons from butyryl-CoA dehydrogenases, and transfers them to the membrane-bound quinone oxidoreductase Swol_0698. In Syntrophomonas wolfei subsp. wolfei (strain DSM 2245B / Goettingen), this protein is Electron transfer flavoprotein subunit alpha.